An 82-amino-acid chain; its full sequence is UPF0298 protein SMU_1670c (82 aa).

This sequence belongs to the UPF0298 family.

It localises to the cytoplasm. The chain is UPF0298 protein SMU_1670c from Streptococcus mutans serotype c (strain ATCC 700610 / UA159).